The chain runs to 333 residues: Glycerol-3-phosphate dehydrogenase [NAD(P)+] (333 aa).

NADPH-binding residues include S13, Y14, R34, and K108. Sn-glycerol 3-phosphate-binding residues include K108, G137, and T139. An NADPH-binding site is contributed by A141. Sn-glycerol 3-phosphate-binding residues include K193, D246, S256, R257, and N258. Residue K193 is the Proton acceptor of the active site. Residue R257 participates in NADPH binding. E283 is a binding site for NADPH.

The protein belongs to the NAD-dependent glycerol-3-phosphate dehydrogenase family.

The protein resides in the cytoplasm. It catalyses the reaction sn-glycerol 3-phosphate + NAD(+) = dihydroxyacetone phosphate + NADH + H(+). The enzyme catalyses sn-glycerol 3-phosphate + NADP(+) = dihydroxyacetone phosphate + NADPH + H(+). Its pathway is membrane lipid metabolism; glycerophospholipid metabolism. In terms of biological role, catalyzes the reduction of the glycolytic intermediate dihydroxyacetone phosphate (DHAP) to sn-glycerol 3-phosphate (G3P), the key precursor for phospholipid synthesis. The protein is Glycerol-3-phosphate dehydrogenase [NAD(P)+] of Idiomarina loihiensis (strain ATCC BAA-735 / DSM 15497 / L2-TR).